Here is an 89-residue protein sequence, read N- to C-terminus: Cell division topological specificity factor (89 aa).

This sequence belongs to the MinE family.

Its function is as follows. Prevents the cell division inhibition by proteins MinC and MinD at internal division sites while permitting inhibition at polar sites. This ensures cell division at the proper site by restricting the formation of a division septum at the midpoint of the long axis of the cell. This Yersinia pestis bv. Antiqua (strain Angola) protein is Cell division topological specificity factor.